The sequence spans 248 residues: MNKELLLGVNIDHIATIRQARGTRYPDPVQAAMDAEEAGADGITLHMREDLRHIQARDVRLIKQVLQTRMNLELAVTEAMLDFAEEISPEHACLVPEKREELTTEGGLDILTHRNVVEKAVRRLQLMGSEVSLFIDPDKEQIRAAVDVGAPVIELHTGCYADATSEEKQHYELQRIKEAAEFAASLNLVVNAGHGLHYHNVKPIAAIRELNELNIGHAIIARALFCGLKEAVRHMRQLMQEARLYVND.

Residue Asn-10 participates in 3-amino-2-oxopropyl phosphate binding. Residue 12 to 13 coordinates 1-deoxy-D-xylulose 5-phosphate; that stretch reads DH. Arg-21 lines the 3-amino-2-oxopropyl phosphate pocket. His-46 (proton acceptor) is an active-site residue. Residues Arg-48 and His-53 each coordinate 1-deoxy-D-xylulose 5-phosphate. The active-site Proton acceptor is Glu-73. Position 103 (Thr-103) interacts with 1-deoxy-D-xylulose 5-phosphate. Catalysis depends on His-194, which acts as the Proton donor. 3-amino-2-oxopropyl phosphate-binding positions include Gly-195 and 216-217; that span reads GH.

The protein belongs to the PNP synthase family. Homooctamer; tetramer of dimers.

The protein resides in the cytoplasm. The enzyme catalyses 3-amino-2-oxopropyl phosphate + 1-deoxy-D-xylulose 5-phosphate = pyridoxine 5'-phosphate + phosphate + 2 H2O + H(+). Its pathway is cofactor biosynthesis; pyridoxine 5'-phosphate biosynthesis; pyridoxine 5'-phosphate from D-erythrose 4-phosphate: step 5/5. In terms of biological role, catalyzes the complicated ring closure reaction between the two acyclic compounds 1-deoxy-D-xylulose-5-phosphate (DXP) and 3-amino-2-oxopropyl phosphate (1-amino-acetone-3-phosphate or AAP) to form pyridoxine 5'-phosphate (PNP) and inorganic phosphate. The chain is Pyridoxine 5'-phosphate synthase from Legionella pneumophila (strain Corby).